The following is a 342-amino-acid chain: L-threonine 3-dehydrogenase (342 aa).

C38 contacts Zn(2+). Active-site charge relay system residues include T40 and H43. H63, E64, C93, C96, C99, and C107 together coordinate Zn(2+). Residues I175, D195, R200, 262–264, and 286–287 each bind NAD(+); these read LGI and IY.

Belongs to the zinc-containing alcohol dehydrogenase family. As to quaternary structure, homotetramer. It depends on Zn(2+) as a cofactor.

The protein localises to the cytoplasm. It catalyses the reaction L-threonine + NAD(+) = (2S)-2-amino-3-oxobutanoate + NADH + H(+). It participates in amino-acid degradation; L-threonine degradation via oxydo-reductase pathway; glycine from L-threonine: step 1/2. Catalyzes the NAD(+)-dependent oxidation of L-threonine to 2-amino-3-ketobutyrate. The sequence is that of L-threonine 3-dehydrogenase from Aeromonas salmonicida (strain A449).